The following is a 1555-amino-acid chain: Probable serine/threonine-protein kinase DDB_G0276181 (1555 aa).

5 disordered regions span residues 1–54 (MTSV…NNSF), 138–208 (IIQQ…NSKL), 342–452 (KLKK…DSPF), 486–508 (TTTTTTTTTAPTTTNTNTNIKPL), and 781–850 (NNIN…NQNT). Low complexity-rich tracts occupy residues 14–53 (NNSGGSDGNIKNNNNNNNNNNNNNNNNNNSNSGNNSNNNS), 138–205 (IIQQ…NNNN), 359–378 (SNIANSANKINNKNNDKING), and 395–431 (NNSQSSSSSVSPTTVSPSVSPLSSSPTKPPIILSKKP). The PH domain occupies 58 to 238 (QVLHTGYLTK…WIEMIKLAIS (181 aa)). A compositionally biased stretch (polar residues) spans 437–452 (RNISTSDNGSGTDSPF). Composition is skewed to low complexity over residues 486 to 504 (TTTTTTTTTAPTTTNTNTN) and 781 to 832 (NNIN…NNNN). Residues 833-850 (GSGLLSSSPLITISNQNT) show a composition bias toward polar residues. A Protein kinase domain is found at 986–1309 (VVLHERLGTG…TIIHSISKMI (324 aa)). 992–1000 (LGTGATGDI) is an ATP binding site. The disordered stretch occupies residues 1012–1031 (RHISNQDSSGSNSSGSGSGH). Lys-1061 contacts ATP. Asp-1156 acts as the Proton acceptor in catalysis. Residues 1340-1376 (VQNNNNNSNNNNNNNNNNNNNNSNSNLNNCNNSSPNL) show a composition bias toward low complexity. Disordered regions lie at residues 1340–1383 (VQNN…SANN) and 1457–1480 (KKSSLEVHSKHKSKRFSYDGGSSR).

This sequence belongs to the protein kinase superfamily. TKL Ser/Thr protein kinase family.

The catalysed reaction is L-seryl-[protein] + ATP = O-phospho-L-seryl-[protein] + ADP + H(+). The enzyme catalyses L-threonyl-[protein] + ATP = O-phospho-L-threonyl-[protein] + ADP + H(+). This is Probable serine/threonine-protein kinase DDB_G0276181 from Dictyostelium discoideum (Social amoeba).